A 449-amino-acid polypeptide reads, in one-letter code: Ribulose bisphosphate carboxylase large chain (449 aa).

K7 carries the N6,N6,N6-trimethyllysine modification. Substrate contacts are provided by N116 and T166. K168 functions as the Proton acceptor in the catalytic mechanism. K170 provides a ligand contact to substrate. The Mg(2+) site is built by K194, D196, and E197. At K194 the chain carries N6-carboxylysine. H287 serves as the catalytic Proton acceptor. 3 residues coordinate substrate: R288, H320, and S372.

The protein belongs to the RuBisCO large chain family. Type I subfamily. As to quaternary structure, heterohexadecamer of 8 large chains and 8 small chains; disulfide-linked. The disulfide link is formed within the large subunit homodimers. Requires Mg(2+) as cofactor. Post-translationally, the disulfide bond which can form in the large chain dimeric partners within the hexadecamer appears to be associated with oxidative stress and protein turnover.

It is found in the plastid. Its subcellular location is the chloroplast. The enzyme catalyses 2 (2R)-3-phosphoglycerate + 2 H(+) = D-ribulose 1,5-bisphosphate + CO2 + H2O. It catalyses the reaction D-ribulose 1,5-bisphosphate + O2 = 2-phosphoglycolate + (2R)-3-phosphoglycerate + 2 H(+). RuBisCO catalyzes two reactions: the carboxylation of D-ribulose 1,5-bisphosphate, the primary event in carbon dioxide fixation, as well as the oxidative fragmentation of the pentose substrate in the photorespiration process. Both reactions occur simultaneously and in competition at the same active site. This is Ribulose bisphosphate carboxylase large chain from Liriope muscari (Big blue lilyturf).